Here is a 213-residue protein sequence, read N- to C-terminus: Octanoyltransferase (213 aa).

Positions 36–211 (TNTPDEIWLV…KFCQQLGFKL (176 aa)) constitute a BPL/LPL catalytic domain. Substrate is bound by residues 75–82 (RGGQVTYH), 142–144 (SLG), and 155–157 (GLA). Cysteine 173 serves as the catalytic Acyl-thioester intermediate.

Belongs to the LipB family.

It localises to the cytoplasm. It carries out the reaction octanoyl-[ACP] + L-lysyl-[protein] = N(6)-octanoyl-L-lysyl-[protein] + holo-[ACP] + H(+). It participates in protein modification; protein lipoylation via endogenous pathway; protein N(6)-(lipoyl)lysine from octanoyl-[acyl-carrier-protein]: step 1/2. In terms of biological role, catalyzes the transfer of endogenously produced octanoic acid from octanoyl-acyl-carrier-protein onto the lipoyl domains of lipoate-dependent enzymes. Lipoyl-ACP can also act as a substrate although octanoyl-ACP is likely to be the physiological substrate. The polypeptide is Octanoyltransferase (Photorhabdus laumondii subsp. laumondii (strain DSM 15139 / CIP 105565 / TT01) (Photorhabdus luminescens subsp. laumondii)).